A 1070-amino-acid chain; its full sequence is DNA-directed RNA polymerase subunit beta (1070 aa).

The protein belongs to the RNA polymerase beta chain family. As to quaternary structure, in plastids the minimal PEP RNA polymerase catalytic core is composed of four subunits: alpha, beta, beta', and beta''. When a (nuclear-encoded) sigma factor is associated with the core the holoenzyme is formed, which can initiate transcription.

Its subcellular location is the plastid. The enzyme catalyses RNA(n) + a ribonucleoside 5'-triphosphate = RNA(n+1) + diphosphate. In terms of biological role, DNA-dependent RNA polymerase catalyzes the transcription of DNA into RNA using the four ribonucleoside triphosphates as substrates. This is DNA-directed RNA polymerase subunit beta from Cuscuta exaltata (Tall dodder).